Reading from the N-terminus, the 742-residue chain is Hapless 2 (742 aa).

Residues 1–19 (MKFLAFGLIYFHFCILNRC) form the signal peptide. At 20 to 540 (EYITSSTIQK…CYFSAGCIKE (521 aa)) the chain is on the extracellular side. Disulfide bonds link C30-C40, C118-C147, C129-C182, C148-C312, C150-C168, C295-C319, and C431-C470. An important for membrane fusion region spans residues 152-179 (LSDILGMGNDLSRGKVCYALNLGAGSAT). The chain crosses the membrane as a helical span at residues 541 to 561 (AFKSIASIAGVASALALVIFL). Residues 562 to 742 (AKNGYLVPII…STSPLYLLIE (181 aa)) are Cytoplasmic-facing.

It belongs to the HAP2/GCS1 family.

It localises to the cell membrane. The protein resides in the cell junction. Its function is as follows. During fertilization, required for the formation of intercellular membrane pores and subsequent exchange of gametic pronuclei between cells. Probably initiates the formation of intercellular membrane pores by inserting part of its extracellular domain into the cell membrane of the adjoining cell in the mating pair. Mating requires the presence of HAP2 on at least one of the two cells. Mating efficiency is high when HAP2 is present on both cells, and is strongly reduced when HAP2 is present on only one of the two cells. The sequence is that of Hapless 2 from Tetrahymena thermophila.